A 513-amino-acid polypeptide reads, in one-letter code: Probable helicase MJ1565 (513 aa).

ATP is bound by residues R151, 160–165, and 467–468; these read GMGKSN and KV.

Belongs to the HerA family.

It catalyses the reaction Couples ATP hydrolysis with the unwinding of duplex DNA at the replication fork by translocating in the 5'-3' direction. This creates two antiparallel DNA single strands (ssDNA). The leading ssDNA polymer is the template for DNA polymerase III holoenzyme which synthesizes a continuous strand.. It carries out the reaction ATP + H2O = ADP + phosphate + H(+). The enzyme catalyses Couples ATP hydrolysis with the unwinding of duplex DNA by translocating in the 3'-5' direction.. Its function is as follows. A probably bidirectional DNA helicase. This Methanocaldococcus jannaschii (strain ATCC 43067 / DSM 2661 / JAL-1 / JCM 10045 / NBRC 100440) (Methanococcus jannaschii) protein is Probable helicase MJ1565.